The following is a 172-amino-acid chain: Adenine phosphoribosyltransferase (172 aa).

It belongs to the purine/pyrimidine phosphoribosyltransferase family. Homodimer.

It is found in the cytoplasm. The enzyme catalyses AMP + diphosphate = 5-phospho-alpha-D-ribose 1-diphosphate + adenine. It functions in the pathway purine metabolism; AMP biosynthesis via salvage pathway; AMP from adenine: step 1/1. Catalyzes a salvage reaction resulting in the formation of AMP, that is energically less costly than de novo synthesis. This is Adenine phosphoribosyltransferase from Streptococcus pyogenes serotype M12 (strain MGAS9429).